Here is a 2157-residue protein sequence, read N- to C-terminus: Conidial yellow pigment biosynthesis polyketide synthase (2157 aa).

The tract at residues 8–244 (YLFGDQTGDF…VMVPIHGPFH (237 aa)) is N-terminal acylcarrier protein transacylase domain (SAT). The region spanning 376-807 (LSKIAIIGMS…GGNTALLLED (432 aa)) is the Ketosynthase family 3 (KS3) domain. Residues Cys-548, His-683, and His-725 each act as for beta-ketoacyl synthase activity in the active site. A malonyl-CoA:ACP transacylase (MAT) domain region spans residues 912–1232 (FLFTGQGAQY…LSSLYLAGVD (321 aa)). The active-site For acyl/malonyl transferase activity is the Ser-1001. The interval 1290–1603 (TTSAQRVVES…RKILDIALPP (314 aa)) is product template (PT) domain. The N-terminal hotdog fold stretch occupies residues 1294-1425 (QRVVESRDDG…CEVKLFDCMA (132 aa)). One can recognise a PKS/mFAS DH domain in the interval 1294 to 1598 (QRVVESRDDG…FQALSRKILD (305 aa)). His-1326 (proton acceptor; for dehydratase activity) is an active-site residue. A C-terminal hotdog fold region spans residues 1453 to 1598 (AHRLRRGMVY…FQALSRKILD (146 aa)). The active-site Proton donor; for dehydratase activity is the Asp-1511. The segment at 1607 to 1638 (SKAQTSPIQSSAPQKPIETAKPTSRPAPPVTM) is disordered. A compositionally biased stretch (polar residues) spans 1608-1619 (KAQTSPIQSSAP). The Carrier 1 domain occupies 1645–1722 (SAGPSVVVRA…DFKRFVTQLS (78 aa)). Position 1682 is an O-(pantetheine 4'-phosphoryl)serine (Ser-1682). The tract at residues 1725–1760 (VASDSSSTDRESEYSFNGDSCSGLSSPASPGTVSPP) is disordered. Positions 1741 to 1759 (NGDSCSGLSSPASPGTVSP) are enriched in polar residues. Positions 1767–1844 (IHENGTMKEI…QIETALDLKP (78 aa)) constitute a Carrier 2 domain. Residue Ser-1804 is modified to O-(pantetheine 4'-phosphoryl)serine. Residues 1847–1888 (VPTAVPQSQPITLPQSQSTKQLSTRPTSSSDNHPPATSILLQ) form a disordered region. Positions 1851–1878 (VPQSQPITLPQSQSTKQLSTRPTSSSDN) are enriched in polar residues. The interval 1877-2149 (DNHPPATSIL…ELATFMKNAL (273 aa)) is claisen cyclase domain. Ser-1967 serves as the catalytic For thioesterase activity.

Pantetheine 4'-phosphate is required as a cofactor.

It catalyses the reaction 6 malonyl-CoA + acetyl-CoA + 6 H(+) = naphtopyrone YWA1 + 6 CO2 + 7 CoA + H2O. The protein operates within polyketide biosynthesis; heptaketide naphthopyrone YWA1 biosynthesis. Functionally, non-reducing polyketide synthase that condenses acetate units to form a heptaketide naphthopyrene YWA1, a yellow pigment found in mature asexual spores (conidia), via a polyketomethylene intermediate step. The sequence is that of Conidial yellow pigment biosynthesis polyketide synthase from Emericella nidulans (strain FGSC A4 / ATCC 38163 / CBS 112.46 / NRRL 194 / M139) (Aspergillus nidulans).